The following is a 453-amino-acid chain: SH2 domain-containing protein 4A (453 aa).

Residues 96–127 (EIIAEQARREAEKEAEQLRKKQEVELSQLSTL) are a coiled coil. A disordered region spans residues 280 to 301 (AVKRPPIPPKPKLPPSANNSSI). The segment covering 284-293 (PPIPPKPKLP) has biased composition (pro residues). The SH2 domain maps to 347-439 (WFHGIISRQE…LGRELLRFPC (93 aa)).

It localises to the cytoplasm. In terms of biological role, inhibits estrogen-induced cell proliferation. This chain is SH2 domain-containing protein 4A (sh2d4a), found in Xenopus tropicalis (Western clawed frog).